Reading from the N-terminus, the 761-residue chain is Polyribonucleotide nucleotidyltransferase (761 aa).

The Mg(2+) site is built by aspartate 532 and aspartate 538. The 60-residue stretch at 598–657 (PRVISVQIPVDKIGELIGPKGKTINAIQDETGADISIDEDGTVYIGAVDGPSAEAARAQV) folds into the KH domain. The S1 motif domain maps to 669–741 (GEQFLGTVVK…DRGKLSLAPV (73 aa)).

Belongs to the polyribonucleotide nucleotidyltransferase family. Requires Mg(2+) as cofactor.

It is found in the cytoplasm. The catalysed reaction is RNA(n+1) + phosphate = RNA(n) + a ribonucleoside 5'-diphosphate. Functionally, involved in mRNA degradation. Catalyzes the phosphorolysis of single-stranded polyribonucleotides processively in the 3'- to 5'-direction. In Leifsonia xyli subsp. xyli (strain CTCB07), this protein is Polyribonucleotide nucleotidyltransferase.